The primary structure comprises 180 residues: VNFSEFSKKCSERWKTMSAKEKGKFEDMAKADKARYEREMKTYIPPKGETKKKFKDPNAPKRPPSAFFLFCSEYRPKIKGEHPGLSIGDVAKKLGEMWNNTAADDKQPYEKKAAKLKEKYEKDIAAYRAKGKPDAAKKGVVKAEKSKKKKEEEDDEEDEEDEEEEEEEEDEDEEEDDDDE.

The short motif at 1 to 8 (VNFSEFSK) is the Nuclear localization signal (NLS) 1 element. Positions 1–44 (VNFSEFSKKCSERWKTMSAKEKGKFEDMAKADKARYEREMKTYI) form a DNA-binding region, HMG box 1. N6-acetyllysine is present on K8. Residues K8 and K9 each participate in an isoglutamyl lysine isopeptide (Lys-Gln) (interchain with Q-?) cross-link. Cysteine sulfonic acid (-SO3H) is present on C10. An Isoglutamyl lysine isopeptide (Lys-Gln) (interchain with Q-?) cross-link involves residue K33. The segment at 45 to 61 (PPKGETKKKFKDPNAPK) is LPS binding (Lipid A). The tract at residues 54–73 (FKDPNAPKRPPSAFFLFCSE) is cytokine-stimulating activity. Residue K55 is modified to N6-acetyllysine. Positions 60 to 128 (PKRPPSAFFL…KYEKDIAAYR (69 aa)) form a DNA-binding region, HMG box 2. The residue at position 65 (S65) is a Phosphoserine. Cysteine sulfonic acid (-SO3H) is present on C71. An N6-acetyllysine mark is found at K92, K93, K106, K137, K138, K142, and K145. The interval 115–148 (KLKEKYEKDIAAYRAKGKPDAAKKGVVKAEKSKK) is binding to AGER/RAGE. Basic and acidic residues predominate over residues 126–144 (AYRAKGKPDAAKKGVVKAE). The interval 126–180 (AYRAKGKPDAAKKGVVKAEKSKKKKEEEDDEEDEEDEEEEEEEEDEDEEEDDDDE) is disordered. The Nuclear localization signal (NLS) 2 motif lies at 143–149 (AEKSKKK). The interval 143-149 (AEKSKKK) is NLS 2. K145 is covalently cross-linked (Isoglutamyl lysine isopeptide (Lys-Gln) (interchain with Q-?)). S146 is modified (ADP-ribosylserine). An N6-acetyllysine mark is found at K147, K148, K149, and K150. Residues K147, K148, and K149 each participate in an isoglutamyl lysine isopeptide (Lys-Gln) (interchain with Q-?) cross-link. A compositionally biased stretch (acidic residues) spans 152–180 (EEDDEEDEEDEEEEEEEEDEDEEEDDDDE).

The protein belongs to the HMGB family. In terms of assembly, interacts (fully reduced HMGB1) with CXCL12; probably in a 1:2 ratio involving two molecules of CXCL12, each interacting with one HMG box of HMGB1; inhibited by glycyrrhizin. Associates with the TLR4:LY96 receptor complex. Component of the RAG complex composed of core components RAG1 and RAG2, and associated component HMGB1 or HMGB2. Interacts (in cytoplasm upon starvation) with BECN1; inhibits the interaction of BECN1 and BCL2 leading to promotion of autophagy. Interacts with KPNA1; involved in nuclear import. Interacts with SREBF1, TLR2, TLR4, TLR9, PTPRZ1, APEX1, FEN1, POLB, TERT. Interacts with IL1B, AGER, MSH2, XPA, XPC, HNF1A, TP53. Interacts with CD24; the probable CD24:SIGLEC10 complex is proposed to inhibit HGMB1-mediated tissue damage immune response. Interacts with THBD; prevents HGMB1 interaction with ACER/RAGE and inhibits HGMB1 pro-inflammatory activity. Interacts with HAVCR2; impairs HMGB1 binding to B-DNA and likely HMGB1-mediated innate immune response. Interacts with XPO1; mediating nuclear export. Interacts with receptor RAGE/AGER. Phosphorylated at serine residues. Phosphorylation in both NLS regions is required for cytoplasmic translocation followed by secretion. In terms of processing, acetylated on multiple sites upon stimulation with LPS. Acetylation on lysine residues in the nuclear localization signals (NLS 1 and NLS 2) leads to cytoplasmic localization and subsequent secretion. Post-translationally, reduction/oxidation of cysteine residues and a possible intramolecular disulfide bond give rise to different redox forms with specific functional activities in various cellular compartments: 1- fully reduced HMGB1 (HMGB1C23hC45hC106h), 2-disulfide HMGB1 (HMGB1C23-C45C106h) and 3- sulfonyl HMGB1 (HMGB1C23soC45soC106so). Poly-ADP-ribosylated by PARP1 when secreted following stimulation with LPS. In terms of processing, in vitro cleavage by CASP1 is liberating a HMG box 1-containing peptide which may mediate immunogenic activity; the peptide antagonizes apoptosis-induced immune tolerance. Can be proteolytically cleaved by a thrombin:thrombomodulin complex; reduces binding to heparin and pro-inflammatory activities. Post-translationally, forms covalent cross-links mediated by transglutaminase TGM2, between a glutamine and the epsilon-amino group of a lysine residue, forming homopolymers and heteropolymers.

It is found in the nucleus. It localises to the chromosome. The protein localises to the cytoplasm. Its subcellular location is the secreted. The protein resides in the cell membrane. It is found in the endosome. It localises to the endoplasmic reticulum-Golgi intermediate compartment. In terms of biological role, multifunctional redox sensitive protein with various roles in different cellular compartments. In the nucleus is one of the major chromatin-associated non-histone proteins and acts as a DNA chaperone involved in replication, transcription, chromatin remodeling, V(D)J recombination, DNA repair and genome stability. Proposed to be an universal biosensor for nucleic acids. Promotes host inflammatory response to sterile and infectious signals and is involved in the coordination and integration of innate and adaptive immune responses. In the cytoplasm functions as a sensor and/or chaperone for immunogenic nucleic acids implicating the activation of TLR9-mediated immune responses, and mediates autophagy. Acts as a danger-associated molecular pattern (DAMP) molecule that amplifies immune responses during tissue injury. Released to the extracellular environment can bind DNA, nucleosomes, IL-1 beta, CXCL12, AGER isoform 2/sRAGE, lipopolysaccharide (LPS) and lipoteichoic acid (LTA), and activates cells through engagement of multiple surface receptors. In the extracellular compartment fully reduced HMGB1 (released by necrosis) acts as a chemokine, disulfide HMGB1 (actively secreted) as a cytokine, and sulfonyl HMGB1 (released from apoptotic cells) promotes immunological tolerance. Has proangiogenic activity. May be involved in platelet activation. Binds to phosphatidylserine and phosphatidylethanolamide. Bound to RAGE mediates signaling for neuronal outgrowth. May play a role in accumulation of expanded polyglutamine (polyQ) proteins. Functionally, nuclear functions are attributed to fully reduced HGMB1. Associates with chromatin and binds DNA with a preference to non-canonical DNA structures such as single-stranded DNA, DNA-containing cruciforms or bent structures, supercoiled DNA and ZDNA. Can bent DNA and enhance DNA flexibility by looping thus providing a mechanism to promote activities on various gene promoters by enhancing transcription factor binding and/or bringing distant regulatory sequences into close proximity. May be involved in nucleotide excision repair (NER), mismatch repair (MMR) and base excision repair (BER) pathways, and double strand break repair such as non-homologous end joining (NHEJ). Involved in V(D)J recombination by acting as a cofactor of the RAG complex: acts by stimulating cleavage and RAG protein binding at the 23 bp spacer of conserved recombination signal sequences (RSS). In vitro can displace histone H1 from highly bent DNA. Can restructure the canonical nucleosome leading to relaxation of structural constraints for transcription factor-binding. Enhances binding of sterol regulatory element-binding proteins (SREBPs) such as SREBF1 to their cognate DNA sequences and increases their transcriptional activities. Facilitates binding of TP53 to DNA. May be involved in mitochondrial quality control and autophagy in a transcription-dependent fashion implicating HSPB1. Can modulate the activity of the telomerase complex and may be involved in telomere maintenance. Its function is as follows. In the cytoplasm proposed to dissociate the BECN1:BCL2 complex via competitive interaction with BECN1 leading to autophagy activation. Can protect BECN1 and ATG5 from calpain-mediated cleavage and thus proposed to control their proautophagic and proapoptotic functions and to regulate the extent and severity of inflammation-associated cellular injury. In myeloid cells has a protective role against endotoxemia and bacterial infection by promoting autophagy. Involved in endosomal translocation and activation of TLR9 in response to CpG-DNA in macrophages. In the extracellular compartment (following either active secretion or passive release) involved in regulation of the inflammatory response. Fully reduced HGMB1 (which subsequently gets oxidized after release) in association with CXCL12 mediates the recruitment of inflammatory cells during the initial phase of tissue injury; the CXCL12:HMGB1 complex triggers CXCR4 homodimerization. Induces the migration of monocyte-derived immature dendritic cells and seems to regulate adhesive and migratory functions of neutrophils implicating AGER/RAGE and ITGAM. Can bind to various types of DNA and RNA including microbial unmethylated CpG-DNA to enhance the innate immune response to nucleic acids. Proposed to act in promiscuous DNA/RNA sensing which cooperates with subsequent discriminative sensing by specific pattern recognition receptors. Promotes extracellular DNA-induced AIM2 inflammasome activation implicating AGER/RAGE. Disulfide HMGB1 binds to transmembrane receptors, such as AGER/RAGE, TLR2, TLR4 and probably TREM1, thus activating their signal transduction pathways. Mediates the release of cytokines/chemokines such as TNF, IL-1, IL-6, IL-8, CCL2, CCL3, CCL4 and CXCL10. Promotes secretion of interferon-gamma by macrophage-stimulated natural killer (NK) cells in concert with other cytokines like IL-2 or IL-12. TLR4 is proposed to be the primary receptor promoting macrophage activation and signaling through TLR4 seems to implicate LY96/MD-2. In bacterial LPS- or LTA-mediated inflammatory responses binds to the endotoxins and transfers them to CD14 for signaling to the respective TLR4:LY96 and TLR2 complexes. Contributes to tumor proliferation by association with ACER/RAGE. Can bind to IL1-beta and signals through the IL1R1:IL1RAP receptor complex. Binding to class A CpG activates cytokine production in plasmacytoid dendritic cells implicating TLR9, MYD88 and AGER/RAGE and can activate autoreactive B cells. Via HMGB1-containing chromatin immune complexes may also promote B cell responses to endogenous TLR9 ligands through a B-cell receptor (BCR)-dependent and ACER/RAGE-independent mechanism. Inhibits phagocytosis of apoptotic cells by macrophages; the function is dependent on poly-ADP-ribosylation and involves binding to phosphatidylserine on the cell surface of apoptotic cells. In adaptive immunity may be involved in enhancing immunity through activation of effector T-cells and suppression of regulatory T (TReg) cells. In contrast, without implicating effector or regulatory T-cells, required for tumor infiltration and activation of T-cells expressing the lymphotoxin LTA:LTB heterotrimer thus promoting tumor malignant progression. Also reported to limit proliferation of T-cells. Released HMGB1:nucleosome complexes formed during apoptosis can signal through TLR2 to induce cytokine production. Involved in induction of immunological tolerance by apoptotic cells; its pro-inflammatory activities when released by apoptotic cells are neutralized by reactive oxygen species (ROS)-dependent oxidation specifically on Cys-106. During macrophage activation by activated lymphocyte-derived self apoptotic DNA (ALD-DNA) promotes recruitment of ALD-DNA to endosomes. This chain is High mobility group protein B1 (HMGB1), found in Cricetulus griseus (Chinese hamster).